We begin with the raw amino-acid sequence, 757 residues long: Endonuclease MutS2 (757 aa).

Residue 321–328 (GPNMGGKT) participates in ATP binding. A Smr domain is found at 681 to 756 (IDIRGMTVEE…GTGVTVVEVK (76 aa)).

This sequence belongs to the DNA mismatch repair MutS family. MutS2 subfamily. In terms of assembly, homodimer. Binds to stalled ribosomes, contacting rRNA.

Functionally, endonuclease that is involved in the suppression of homologous recombination and thus may have a key role in the control of bacterial genetic diversity. Acts as a ribosome collision sensor, splitting the ribosome into its 2 subunits. Detects stalled/collided 70S ribosomes which it binds and splits by an ATP-hydrolysis driven conformational change. Acts upstream of the ribosome quality control system (RQC), a ribosome-associated complex that mediates the extraction of incompletely synthesized nascent chains from stalled ribosomes and their subsequent degradation. Probably generates substrates for RQC. This is Endonuclease MutS2 from Thermotoga petrophila (strain ATCC BAA-488 / DSM 13995 / JCM 10881 / RKU-1).